The primary structure comprises 964 residues: Glycine dehydrogenase (decarboxylating) (964 aa).

K710 bears the N6-(pyridoxal phosphate)lysine mark.

It belongs to the GcvP family. In terms of assembly, the glycine cleavage system is composed of four proteins: P, T, L and H. Pyridoxal 5'-phosphate is required as a cofactor.

The catalysed reaction is N(6)-[(R)-lipoyl]-L-lysyl-[glycine-cleavage complex H protein] + glycine + H(+) = N(6)-[(R)-S(8)-aminomethyldihydrolipoyl]-L-lysyl-[glycine-cleavage complex H protein] + CO2. Functionally, the glycine cleavage system catalyzes the degradation of glycine. The P protein binds the alpha-amino group of glycine through its pyridoxal phosphate cofactor; CO(2) is released and the remaining methylamine moiety is then transferred to the lipoamide cofactor of the H protein. This chain is Glycine dehydrogenase (decarboxylating), found in Saccharophagus degradans (strain 2-40 / ATCC 43961 / DSM 17024).